We begin with the raw amino-acid sequence, 906 residues long: Serine-aspartate repeat-containing protein C (906 aa).

A signal peptide spans 1–50; that stretch reads MNNKKTATNRKGMIPNRLNKFSIRKYSVGTASILVGTTLIFGLSGHEAKA. The disordered stretch occupies residues 51 to 127; the sequence is AEHTNGELNQ…QPTKKNNDAT (77 aa). The ligand binding A region stretch occupies residues 51 to 486; that stretch reads AEHTNGELNQ…GSSTANGDQK (436 aa). Composition is skewed to polar residues over residues 56–71 and 80–119; these read GELNQSKNEATAPSEN and RQQNNVEQSTTSNQPKVNESDNTSVKETTEEPQNTTSTQP. CNA-B domains are found at residues 487 to 597 and 598 to 708; these read KYNL…YKTP and KYSL…EEET. The tract at residues 669–881 is disordered; sequence KQTGTNTTED…TGSENNGSNN (213 aa). Acidic residues-rich tracts occupy residues 676-686 and 703-845; these read TEDDKDADGGE and YFEE…DSDS. The LPXTG sorting signal signature appears at 869–873; that stretch reads LPETG. Threonine 872 bears the Pentaglycyl murein peptidoglycan amidated threonine mark. The propeptide at 873-906 is removed by sortase; that stretch reads GSENNGSNNATLFGGLFAALGSLLLFGRRKKQNK.

It belongs to the serine-aspartate repeat-containing protein (SDr) family. In terms of assembly, homodimerizes; via N2-Domain. Interacts with host NRXN1; this interaction mediates bacterial attachment to host cells.

The protein localises to the secreted. It localises to the cell wall. Functionally, cell surface-associated calcium-binding protein which plays an important role in adhesion and pathogenesis. Mediates interactions with components of the extracellular matrix such as host NRXN1 to promote bacterial adhesion. In Staphylococcus aureus (strain MRSA252), this protein is Serine-aspartate repeat-containing protein C (sdrC).